We begin with the raw amino-acid sequence, 357 residues long: Neurogenic differentiation factor 1 (357 aa).

A disordered region spans residues 1–94 (MTKSYSESGL…GPKKKKMTKA (94 aa)). Positions 58–78 (EEEEEDEDLEEEEEEEEEEED) are enriched in acidic residues. Residues 81 to 93 (PKRRGPKKKKMTK) are compositionally biased toward basic residues. The Nuclear localization signal signature appears at 87–93 (KKKKMTK). The region spanning 101–153 (LRRMKANARERNRMHGLNAALDNLRKVVPCYSKTQKLSKIETLRLAKNYIWAL) is the bHLH domain. A phosphoserine mark is found at Ser-162, Ser-259, Ser-266, and Ser-274. Residue Ser-336 is modified to Phosphoserine; by CaMK2.

In terms of assembly, efficient DNA-binding requires dimerization with another bHLH protein. Heterodimer with TCF3/E47; the heterodimer is inhibited in presence of ID2, but not NR0B2, to E-box element. Interacts with EP300; the interaction is inhibited by NR0B2. Interacts with RREB1. Interacts with ATOH8. Post-translationally, in islet cells, phosphorylated on Ser-274 upon glucose stimulation; which may be required for nuclear localization. In activated neurons, phosphorylated on Ser-336; which promotes dendritic growth. Phosphorylated by MAPK1; phosphorylation regulates heterodimerization and DNA-binding activities. Phosphorylation on Ser-266 and Ser-274 increases transactivation on the insulin promoter in glucose-stimulated insulinoma cells. As to expression, expressed in pancreatic beta cells, pulmonary neuroendocrine cells and retinal interneurons amacrine cells (at protein level). Expressed in endocrine cells of the pancreas. Expressed in the inner layer of cerebellar external granular layer (EGL). Expressed in the Ammon's horn (AH), which includes the CA1-CA3 pyramidal layer and in granule cells of the dentate gyrus (DG). Expressed in photoreceptors of the outer nuclear layer (ONL), in a subset of cells in the lower half of the inner nuclear layer (INL), and in a subset of cells in the ganglion cell layer (GCL) of the retina. Expressed in cholinergic and AII amacrine cell types. Expressed in differentiating neurons of both the central and peripheral nervous systems.

It is found in the cytoplasm. Its subcellular location is the nucleus. Its function is as follows. Acts as a transcriptional activator: mediates transcriptional activation by binding to E box-containing promoter consensus core sequences 5'-CANNTG-3'. Associates with the p300/CBP transcription coactivator complex to stimulate transcription of the secretin gene as well as the gene encoding the cyclin-dependent kinase inhibitor CDKN1A. Contributes to the regulation of several cell differentiation pathways, like those that promote the formation of early retinal ganglion cells, inner ear sensory neurons, granule cells forming either the cerebellum or the dentate gyrus cell layer of the hippocampus, endocrine islet cells of the pancreas and enteroendocrine cells of the small intestine. Together with PAX6 or SIX3, is required for the regulation of amacrine cell fate specification. Also required for dendrite morphogenesis and maintenance in the cerebellar cortex. Associates with chromatin to enhancer regulatory elements in genes encoding key transcriptional regulators of neurogenesis. This Mus musculus (Mouse) protein is Neurogenic differentiation factor 1 (Neurod1).